Here is a 302-residue protein sequence, read N- to C-terminus: Cell division protein FtsQ (302 aa).

The Cytoplasmic portion of the chain corresponds to 1-43 (MRPVDKKPVDRKIERETRYLRRDPAPSRWSYRYQRLMLTPAFR). A helical transmembrane segment spans residues 44–64 (AGVRLGTPVIIIALAVAVVFG). The Periplasmic portion of the chain corresponds to 65–302 (RADSRDWIMG…SMPGRSAGRG (238 aa)). The region spanning 89–156 (FMVGSFAITG…GVLQIVIEER (68 aa)) is the POTRA domain.

It belongs to the FtsQ/DivIB family. FtsQ subfamily.

It localises to the cell inner membrane. Its function is as follows. Essential cell division protein. This is Cell division protein FtsQ from Ketogulonicigenium vulgare (strain Y25).